Here is an 897-residue protein sequence, read N- to C-terminus: Patched domain-containing protein 1 (897 aa).

A helical transmembrane segment spans residues 25–45; it reads PVFFLTVPAVLTIIFGSTVLS. N-linked (GlcNAc...) asparagine glycans are attached at residues Asn-132, Asn-167, and Asn-179. 2 helical membrane-spanning segments follow: residues 271–291 and 306–326; these read GVLA…AATI and GLLG…IFFI. The 161-residue stretch at 273-433 folds into the SSD domain; the sequence is LAKSEVLVSL…FSFYGSCLVF (161 aa). Asn-332 carries an N-linked (GlcNAc...) asparagine glycan. Transmembrane regions (helical) follow at residues 335 to 355, 377 to 397, 414 to 434, and 506 to 526; these read LLGI…ELLA, VMVC…MGAS, VAVL…LVFA, and PFVV…CLQI. N-linked (GlcNAc...) asparagine glycosylation is found at Asn-572 and Asn-603. Transmembrane regions (helical) follow at residues 701–721, 727–747, and 754–774; these read PILT…FLVI, FWLI…MTLW, and ISIL…APHL. Asn-803 carries an N-linked (GlcNAc...) asparagine glycan. 2 helical membrane-spanning segments follow: residues 806–826 and 831–851; these read CFVI…YTLF and LTAG…LTFF. Basic residues predominate over residues 856–866; that stretch reads KRHKKKKRAKR. The tract at residues 856–881 is disordered; it reads KRHKKKKRAKRKEREREREREREREE. A compositionally biased stretch (basic and acidic residues) spans 867-881; it reads KEREREREREREREE.

The protein belongs to the patched family.

Its subcellular location is the cell membrane. The protein resides in the cell projection. It is found in the dendritic spine. Its function is as follows. Can bind cholesterol in vitro. This Danio rerio (Zebrafish) protein is Patched domain-containing protein 1 (ptchd1).